Consider the following 192-residue polypeptide: Immunity protein YqcF (192 aa).

In terms of assembly, probably interacts with cognate toxin YqcG but not with other non-cognate toxins. The interaction inhibits the toxic activity of YqcG.

It localises to the cytoplasm. In terms of biological role, immunity component of one of 6 LXG toxin-immunity modules in this strain. They promote kin selection, mediate competition in biofilms, and drive spatial segregation of different strains, indicating that LXG toxins may help avoid warfare between strains in biofilms. Mediates intercellular competition during biofilm formation; disruption of the operon disadvantages the bacteria, but overexpression of the cognate immunity protein restores growth in competition with wild-type. In situ neutralizes the toxic effect of cognate toxin YqcG. Neutralizes the toxic activity of cognate toxin YqcG upon expression in E.coli. Does not have immunity protein activity on other LXG toxins. In Bacillus subtilis (strain 168), this protein is Immunity protein YqcF (yqcF).